A 1434-amino-acid polypeptide reads, in one-letter code: Probable ATP-dependent RNA helicase spindle-E (1434 aa).

Residues 125–292 (LAAINAHPVI…FATTNSIPPV (168 aa)) form the Helicase ATP-binding domain. 138-145 (GETGCGKT) is an ATP binding site. The short motif at 238–241 (DEVH) is the DEAH box element. The 188-residue stretch at 339–526 (KIIVIIDNME…NSVLKAKVLN (188 aa)) folds into the Helicase C-terminal domain. One can recognise a Tudor domain in the interval 938 to 1001 (AGDITKGMMV…RLMPRELTEQ (64 aa)).

This sequence belongs to the DEAD box helicase family. DEAH subfamily.

The protein resides in the cytoplasm. It catalyses the reaction ATP + H2O = ADP + phosphate + H(+). Probable ATP-binding RNA helicase which plays a central role during spermatogenesis and oogenesis by repressing transposable elements and preventing their mobilization, which is essential for the germline integrity. Acts via the piRNA metabolic process, which mediates the repression of transposable elements during meiosis by forming complexes composed of piRNAs and Piwi and govern the methylation and subsequent repression of transposons. Involved in the repression of LTR retrotransposon copia. Also involved in telomere regulation by repressing specialized telomeric retroelements HeT-A, TAHRE, and TART; Drosophila telomeres being maintained by transposition of specialized telomeric retroelements. Involved in telomeric trans-silencing, a repression mechanism by which a transposon or a transgene inserted in subtelomeric heterochromatin has the capacity to repress in trans in the female germline, a homologous transposon, or transgene located in euchromatin. Involved in the repression of testis-expressed Stellate genes by the homologous Su(Ste) repeats. Required for anteroposterior and dorsoventral axis formation during oogenesis. The sequence is that of Probable ATP-dependent RNA helicase spindle-E (spn-E) from Drosophila sechellia (Fruit fly).